The following is a 158-amino-acid chain: Disulfide bond formation protein B (158 aa).

At 1-7 (MKNSRPV) the chain is on the cytoplasmic side. Residues 8–24 (LFAVALASLLLLAVALY) form a helical membrane-spanning segment. Over 25–42 (LQHVENMLPCPLCVIQRY) the chain is Periplasmic. An intrachain disulfide couples C34 to C37. A helical membrane pass occupies residues 43-57 (AFAAIALICLVTAFR). The Cytoplasmic segment spans residues 58-63 (TEVTAR). A helical transmembrane segment spans residues 64–81 (IGAALAALASLAGAGVAG). The Periplasmic segment spans residues 82–136 (WHIYIKAHPTVSCGIDPLETSLNTIPTAKLLPFLLQADGLCTTEYAPIMGLSIPQ). A disulfide bridge links C94 with C122. A helical membrane pass occupies residues 137–155 (WALVWFIVIALFLLHTAFR). The Cytoplasmic portion of the chain corresponds to 156 to 158 (KKS).

This sequence belongs to the DsbB family.

It localises to the cell inner membrane. Functionally, required for disulfide bond formation in some periplasmic proteins. Acts by oxidizing the DsbA protein. This chain is Disulfide bond formation protein B, found in Herminiimonas arsenicoxydans.